The sequence spans 439 residues: MSVPSALMKQPPIQSTAGAVPVRNEKGEISMEKVKVKRYVSGKRPDYAPMESSDEEDEEFQFIKKAKEQEAEPEEQEEDSSSDPRLRRLQNRISEDVEERLARHRKIVEPEVVGESDSEVEGDAWRLEREDSSEEEEEEIDDEEIERRRGMMRQRAQERKNEEMEVMEVEDEGRSGEESESESEYEEYTDSEDEMEPRLKPVFIRKKDRVTVQEREAEALKQKELEQEAKRMAEERRKYTLKIVEEETKKELEENKRSLAALDALNTDDENDEEEYEAWKVRELKRIKREREDREALEKEKAEIERMRNLTEEERRAELRANGKVITNKAVKGKYKFLQKYYHRGAFFMDEDEEVYKRDFSAPTLEDHFNKTILPKVMQVKNFGRSGRTKYTHLVDQDTTSFDSAWGQESAQNTKFFKQKAAGVRDVFERPSAKKRKTT.

Residues 1 to 200 form a disordered region; the sequence is MSVPSALMKQ…SEDEMEPRLK (200 aa). An N-acetylserine modification is found at S2. Positions 23–34 are enriched in basic and acidic residues; that stretch reads RNEKGEISMEKV. Phosphoserine occurs at positions 52 and 53. The segment covering 61–70 has biased composition (basic and acidic residues); the sequence is QFIKKAKEQE. K67 participates in a covalent cross-link: Glycyl lysine isopeptide (Lys-Gly) (interchain with G-Cter in SUMO2). The segment covering 71 to 81 has biased composition (acidic residues); the sequence is AEPEEQEEDSS. A phosphoserine mark is found at S94, S116, S118, S132, and S133. 2 stretches are compositionally biased toward acidic residues: residues 112–122 and 131–144; these read VVGESDSEVEG and DSSE…DDEE. Residues 145 to 163 show a composition bias toward basic and acidic residues; it reads IERRRGMMRQRAQERKNEE. Acidic residues predominate over residues 178-195; sequence ESESESEYEEYTDSEDEM. K249 is covalently cross-linked (Glycyl lysine isopeptide (Lys-Gly) (interchain with G-Cter in SUMO2)). T267 is subject to Phosphothreonine. K357 is covalently cross-linked (Glycyl lysine isopeptide (Lys-Gly) (interchain with G-Cter in SUMO2)). S361 carries the post-translational modification Phosphoserine. Glycyl lysine isopeptide (Lys-Gly) (interchain with G-Cter in SUMO2) cross-links involve residues K371, K381, K415, and K418. S432 carries the phosphoserine modification.

The protein belongs to the MFAP1 family. Component of the spliceosome B complex. Interacts with PRPF38A (via N-terminal interaction domain).

Its subcellular location is the nucleus. Functionally, involved in pre-mRNA splicing as a component of the spliceosome. This chain is Microfibrillar-associated protein 1A, found in Mus musculus (Mouse).